Here is a 507-residue protein sequence, read N- to C-terminus: Sperm-associated antigen 6 (507 aa).

8 ARM repeats span residues 31-70 (PQNI…RLAN), 73-112 (DDLA…AVGK), 115-154 (PQLA…YIAR), 157-196 (TELS…DISK), 199-238 (PELA…QIAK), 241-280 (VDLA…EIAK), 325-365 (ENLA…QLGR), and 402-441 (KAIK…KVLP).

In terms of assembly, interacts with SPAG16 and SPAG17. In terms of tissue distribution, highly expressed in testis. Not detected in prostate, ovary, spleen, thymus, small intestine, colon and peripheral blood leukocytes.

It is found in the cytoplasm. The protein localises to the cytoskeleton. The protein resides in the cell projection. It localises to the cilium. Its subcellular location is the flagellum. It is found in the cilium axoneme. Important for structural integrity of the central apparatus in the sperm tail and for flagellar motility. This chain is Sperm-associated antigen 6 (Spag6), found in Mus musculus (Mouse).